Reading from the N-terminus, the 412-residue chain is Angiopoietin-related protein 4 (412 aa).

The first 23 residues, 1 to 23, serve as a signal peptide directing secretion; sequence MRSAPTARAALVLCAATAGLLSA. A coiled-coil region spans residues 106-153; that stretch reads ETLHSLQTQLKAQNSKIQQLFQKVAQQQRHLEKQHLRIQNLQGQLDHL. Asn183 is a glycosylation site (N-linked (GlcNAc...) asparagine). Residues 185–407 enclose the Fibrinogen C-terminal domain; it reads SRLHRLPRDC…ATTMLIQPTV (223 aa). 2 disulfides stabilise this stretch: Cys194–Cys222 and Cys347–Cys360.

In terms of assembly, homooligomer; disulfide-linked via Cys residues in the N-terminal part of the protein. The homooligomer undergoes proteolytic processing to release the ANGPTL4 C-terminal chain, which circulates as a monomer. The homooligomer unprocessed form is able to interact with the extracellular matrix. Post-translationally, N-glycosylated. In terms of processing, forms disulfide-linked dimers and tetramers. Cleaved into a smaller N-terminal chain and a larger chain that contains the fibrinogen C-terminal domain; both cleaved and uncleaved forms are detected in the extracellular space. The cleaved form is not present within the cell.

The protein localises to the secreted. It is found in the extracellular space. It localises to the extracellular matrix. Functionally, mediates inactivation of the lipoprotein lipase LPL, and thereby plays a role in the regulation of triglyceride clearance from the blood serum and in lipid metabolism. May also play a role in regulating glucose homeostasis and insulin sensitivity. Inhibits proliferation, migration, and tubule formation of endothelial cells and reduces vascular leakage. Upon heterologous expression, inhibits the adhesion of endothelial cell to the extracellular matrix (ECM), and inhibits the reorganization of the actin cytoskeleton, formation of actin stress fibers and focal adhesions in endothelial cells that have adhered to ANGPTL4-containing ECM (in vitro). Depending on context, may modulate tumor-related angiogenesis. Mediates inactivation of the lipoprotein lipase LPL, and thereby plays an important role in the regulation of triglyceride clearance from the blood serum and in lipid metabolism. Has higher activity in LPL inactivation than the uncleaved protein. The protein is Angiopoietin-related protein 4 (ANGPTL4) of Sus scrofa (Pig).